The following is a 583-amino-acid chain: Glucosidase 2 subunit beta (583 aa).

The signal sequence occupies residues 1–26; sequence MVRLNLAVVALAAGALSASASASSSA. C91 and C115 are disulfide-bonded. Residues 130–252 adopt a coiled-coil conformation; it reads NRCEKVGKEY…LTLLLDDLAK (123 aa). Residues 455–562 enclose the MRH domain; it reads NKCFSKDMGE…KVATPAVCFP (108 aa). 3 cysteine pairs are disulfide-bonded: C457-C470, C519-C548, and C533-C560. A Prevents secretion from ER motif is present at residues 580 to 583; the sequence is KDEL.

As to quaternary structure, heterodimer of a catalytic subunit alpha and a subunit beta.

It localises to the endoplasmic reticulum. Functionally, subunit of glucosidase 2, which cleaves sequentially the 2 innermost alpha-1,3-linked glucose residues from the Glc(2)Man(9)GlcNAc(2) oligosaccharide precursor of immature glycoproteins in the endoplasmic reticulum (ER). Specifically required for the cleavage of the final glucose. The subunit beta retains the catalytic subunit alpha in the ER. In Mycosarcoma maydis (Corn smut fungus), this protein is Glucosidase 2 subunit beta.